A 359-amino-acid chain; its full sequence is Histidinol-phosphate aminotransferase (359 aa).

At K217 the chain carries N6-(pyridoxal phosphate)lysine.

Belongs to the class-II pyridoxal-phosphate-dependent aminotransferase family. Histidinol-phosphate aminotransferase subfamily. Homodimer. It depends on pyridoxal 5'-phosphate as a cofactor.

It catalyses the reaction L-histidinol phosphate + 2-oxoglutarate = 3-(imidazol-4-yl)-2-oxopropyl phosphate + L-glutamate. It functions in the pathway amino-acid biosynthesis; L-histidine biosynthesis; L-histidine from 5-phospho-alpha-D-ribose 1-diphosphate: step 7/9. In Salmonella enteritidis PT4 (strain P125109), this protein is Histidinol-phosphate aminotransferase.